We begin with the raw amino-acid sequence, 335 residues long: 7,8-didemethyl-8-hydroxy-5-deazariboflavin synthase (335 aa).

Residues 1-246 (MTYSKNVFIP…QVAPNLIDPK (246 aa)) enclose the Radical SAM core domain. Positions 15, 19, and 22 each coordinate [4Fe-4S] cluster.

The protein belongs to the radical SAM superfamily. CofG family. Consists of two subunits, CofG and CofH. [4Fe-4S] cluster is required as a cofactor.

The enzyme catalyses 5-amino-5-(4-hydroxybenzyl)-6-(D-ribitylimino)-5,6-dihydrouracil + S-adenosyl-L-methionine = 7,8-didemethyl-8-hydroxy-5-deazariboflavin + 5'-deoxyadenosine + L-methionine + NH4(+) + H(+). The protein operates within cofactor biosynthesis; coenzyme F0 biosynthesis. Its function is as follows. Catalyzes the radical-mediated synthesis of 7,8-didemethyl-8-hydroxy-5-deazariboflavin from 5-amino-5-(4-hydroxybenzyl)-6-(D-ribitylimino)-5,6-dihydrouracil. The sequence is that of 7,8-didemethyl-8-hydroxy-5-deazariboflavin synthase from Methanosarcina mazei (strain ATCC BAA-159 / DSM 3647 / Goe1 / Go1 / JCM 11833 / OCM 88) (Methanosarcina frisia).